A 1939-amino-acid chain; its full sequence is Myosin-4 (1939 aa).

In terms of domain architecture, Myosin N-terminal SH3-like spans 33–82 (DAKSSVFVVDAKESYVKATVQSREGGKVTAKTEGGATVTVKEDQVFSMNP). Residue Ser-36 is modified to Phosphoserine. Residues Thr-64 and Thr-69 each carry the phosphothreonine modification. A Phosphoserine modification is found at Ser-79. The Myosin motor domain maps to 86–782 (DKIEDMAMMT…LLGTLEEMRD (697 aa)). Lys-130 is modified (N6,N6,N6-trimethyllysine). An ATP-binding site is contributed by 179 to 186 (GESGAGKT). At Tyr-389 the chain carries Phosphotyrosine. Position 391 is a phosphothreonine (Thr-391). Position 392 is a phosphoserine (Ser-392). At Thr-419 the chain carries Phosphothreonine. Residue Tyr-424 is modified to Phosphotyrosine. Ser-625 bears the Phosphoserine mark. The actin-binding stretch occupies residues 659-681 (LNKLMTNLKSTHPHFVRCLIPNE). Residue His-757 is modified to Pros-methylhistidine. Residues 761 to 775 (KFGHTKVFFKAGLLG) are actin-binding. Thr-776 bears the Phosphothreonine mark. Positions 785–814 (LAQLITRTQAVCRGYLMRVEFRKMMERRES) constitute an IQ domain. Residues 843–1939 (LLKSAETEKE…EVHTKVISEE (1097 aa)) adopt a coiled-coil conformation. Phosphoserine occurs at positions 1092 and 1096. Disordered stretches follow at residues 1128–1147 (AERA…SREL) and 1153–1172 (RLEE…KKRE). Residues Ser-1162 and Ser-1237 each carry the phosphoserine modification. Thr-1241 is subject to Phosphothreonine. Phosphoserine is present on Ser-1243. Phosphothreonine is present on Thr-1255. At Ser-1261 the chain carries Phosphoserine. A Phosphothreonine modification is found at Thr-1265. The residue at position 1278 (Ser-1278) is a Phosphoserine. Thr-1286 carries the post-translational modification Phosphothreonine. Ser-1288, Ser-1292, Ser-1303, Ser-1306, and Ser-1413 each carry phosphoserine. The residue at position 1464 (Tyr-1464) is a Phosphotyrosine. A Phosphothreonine modification is found at Thr-1467. Ser-1474 is modified (phosphoserine). Tyr-1492 is modified (phosphotyrosine). The residue at position 1495 (Ser-1495) is a Phosphoserine. Thr-1501 carries the phosphothreonine modification. Ser-1514 is modified (phosphoserine). Residue Thr-1517 is modified to Phosphothreonine. Phosphoserine is present on residues Ser-1542, Ser-1547, Ser-1554, Ser-1574, Ser-1600, Ser-1603, Ser-1714, and Ser-1726. Phosphothreonine occurs at positions 1730 and 1736. Ser-1739 bears the Phosphoserine mark.

This sequence belongs to the TRAFAC class myosin-kinesin ATPase superfamily. Myosin family. As to quaternary structure, muscle myosin is a hexameric protein that consists of 2 heavy chain subunits (MHC), 2 alkali light chain subunits (MLC) and 2 regulatory light chain subunits (MLC-2).

The protein localises to the cytoplasm. It localises to the myofibril. Functionally, muscle contraction. The protein is Myosin-4 of Rattus norvegicus (Rat).